Consider the following 146-residue polypeptide: Transcriptional regulator MraZ (146 aa).

SpoVT-AbrB domains lie at 5 to 50 (SSFH…TFNE) and 77 to 120 (ACEC…SREQ).

It belongs to the MraZ family. As to quaternary structure, forms oligomers.

Its subcellular location is the cytoplasm. The protein resides in the nucleoid. In Desulforapulum autotrophicum (strain ATCC 43914 / DSM 3382 / VKM B-1955 / HRM2) (Desulfobacterium autotrophicum), this protein is Transcriptional regulator MraZ.